A 215-amino-acid chain; its full sequence is Cytochrome b6 (215 aa).

A helical membrane pass occupies residues 32–52 (IFYCLGGITLTCFLVQVATGF). Cysteine 35 is a heme c binding site. Positions 86 and 100 each coordinate heme b. Helical transmembrane passes span 90 to 110 (ASMM…TGGF), 116 to 136 (LTWV…VTGY), and 186 to 206 (LHTF…FLMI). Residues histidine 187 and histidine 202 each coordinate heme b.

The protein belongs to the cytochrome b family. PetB subfamily. As to quaternary structure, the 4 large subunits of the cytochrome b6-f complex are cytochrome b6, subunit IV (17 kDa polypeptide, PetD), cytochrome f and the Rieske protein, while the 4 small subunits are PetG, PetL, PetM and PetN. The complex functions as a dimer. Requires heme b as cofactor. It depends on heme c as a cofactor.

It localises to the plastid. Its subcellular location is the chloroplast thylakoid membrane. Its function is as follows. Component of the cytochrome b6-f complex, which mediates electron transfer between photosystem II (PSII) and photosystem I (PSI), cyclic electron flow around PSI, and state transitions. In Hordeum vulgare (Barley), this protein is Cytochrome b6.